A 217-amino-acid polypeptide reads, in one-letter code: Protein-L-isoaspartate O-methyltransferase (217 aa).

Serine 65 is an active-site residue.

The protein belongs to the methyltransferase superfamily. L-isoaspartyl/D-aspartyl protein methyltransferase family.

Its subcellular location is the cytoplasm. The enzyme catalyses [protein]-L-isoaspartate + S-adenosyl-L-methionine = [protein]-L-isoaspartate alpha-methyl ester + S-adenosyl-L-homocysteine. Catalyzes the methyl esterification of L-isoaspartyl residues in peptides and proteins that result from spontaneous decomposition of normal L-aspartyl and L-asparaginyl residues. It plays a role in the repair and/or degradation of damaged proteins. The chain is Protein-L-isoaspartate O-methyltransferase from Methanoregula boonei (strain DSM 21154 / JCM 14090 / 6A8).